Consider the following 477-residue polypeptide: Protein translocase subunit SecY (477 aa).

10 consecutive transmembrane segments (helical) span residues 28 to 48 (FMIS…LAII), 67 to 89 (FFSL…AVGI), 130 to 150 (IITL…ATNS), 165 to 185 (DFVA…VFLG), 196 to 216 (GITL…FIAA), 234 to 254 (AISF…TTFI), 286 to 306 (SAGV…VTIA), 329 to 349 (GIVL…YIQI), 387 to 407 (FIGA…SALI), and 413 to 433 (LSLG…FMSA).

It belongs to the SecY/SEC61-alpha family. As to quaternary structure, component of the Sec protein translocase complex. Heterotrimer consisting of SecY, SecE and SecG subunits. The heterotrimers can form oligomers, although 1 heterotrimer is thought to be able to translocate proteins. Interacts with the ribosome. Interacts with SecDF, and other proteins may be involved. Interacts with SecA.

It localises to the cell membrane. The central subunit of the protein translocation channel SecYEG. Consists of two halves formed by TMs 1-5 and 6-10. These two domains form a lateral gate at the front which open onto the bilayer between TMs 2 and 7, and are clamped together by SecE at the back. The channel is closed by both a pore ring composed of hydrophobic SecY resides and a short helix (helix 2A) on the extracellular side of the membrane which forms a plug. The plug probably moves laterally to allow the channel to open. The ring and the pore may move independently. The polypeptide is Protein translocase subunit SecY (Mycoplasma pneumoniae (strain ATCC 29342 / M129 / Subtype 1) (Mycoplasmoides pneumoniae)).